The sequence spans 407 residues: tRNA (guanine(9)-N1)-methyltransferase (407 aa).

Over residues 1–19 (MDLDPAHKPSQAEETKEQG) the composition is skewed to basic and acidic residues. Disordered stretches follow at residues 1–105 (MDLD…VRKR) and 220–256 (ENMI…PRPE). Residues 20 to 32 (NEQGQVEQNQAQQ) show a composition bias toward low complexity. The span at 91–103 (LKRKDSRIARKVR) shows a compositional bias: basic residues. Residues 120 to 356 (ANKQKPPSVN…SVIPKRKGGK (237 aa)) enclose the SAM-dependent MTase TRM10-type domain. S-adenosyl-L-methionine contacts are provided by residues 263–264 (LS), glycine 283, 287–291 (DKNRE), cysteine 295, leucine 309, and 321–323 (TVL). Aspartate 287 (proton acceptor) is an active-site residue. The disordered stretch occupies residues 353 to 407 (KGGKLKEQQGASGETQETEEAEAEDPEEENEETKDPDAEASASKQNTPKVEVTSK). Over residues 368–386 (QETEEAEAEDPEEENEETK) the composition is skewed to acidic residues. A compositionally biased stretch (polar residues) spans 394–407 (ASKQNTPKVEVTSK).

Belongs to the class IV-like SAM-binding methyltransferase superfamily. TRM10 family. As to quaternary structure, monomer.

Its subcellular location is the cytoplasm. The protein resides in the nucleus. It carries out the reaction guanosine(9) in tRNA + S-adenosyl-L-methionine = N(1)-methylguanosine(9) in tRNA + S-adenosyl-L-homocysteine + H(+). Its function is as follows. S-adenosyl-L-methionine-dependent guanine N(1)-methyltransferase that catalyzes the formation of N(1)-methylguanine at position 9 (m1G9) in cytoplasmic tRNA. This chain is tRNA (guanine(9)-N1)-methyltransferase, found in Gibberella zeae (strain ATCC MYA-4620 / CBS 123657 / FGSC 9075 / NRRL 31084 / PH-1) (Wheat head blight fungus).